The primary structure comprises 707 residues: Polyribonucleotide nucleotidyltransferase (707 aa).

Mg(2+) contacts are provided by Asp486 and Asp492. The 60-residue stretch at Pro553–Ile612 folds into the KH domain. In terms of domain architecture, S1 motif spans Gly622–Lys690.

This sequence belongs to the polyribonucleotide nucleotidyltransferase family. Component of the RNA degradosome, which is a multiprotein complex involved in RNA processing and mRNA degradation. The cofactor is Mg(2+).

It is found in the cytoplasm. The catalysed reaction is RNA(n+1) + phosphate = RNA(n) + a ribonucleoside 5'-diphosphate. In terms of biological role, involved in mRNA degradation. Catalyzes the phosphorolysis of single-stranded polyribonucleotides processively in the 3'- to 5'-direction. The polypeptide is Polyribonucleotide nucleotidyltransferase (Buchnera aphidicola subsp. Acyrthosiphon pisum (strain 5A)).